Here is a 457-residue protein sequence, read N- to C-terminus: Protein translocase subunit SecY (457 aa).

A run of 10 helical transmembrane segments spans residues 17 to 37 (IFFT…PVPG), 75 to 95 (IALG…LVVF), 120 to 140 (LFTL…ALRM), 163 to 183 (VFYL…MWIG), 195 to 215 (ISLI…GSIF), 230 to 250 (IVSL…TVLI), 287 to 307 (VIPV…GQFL), 326 to 346 (VVYS…WTAT), 386 to 406 (LLGA…GRIL), and 412 to 432 (VSYF…LDTM).

It belongs to the SecY/SEC61-alpha family. Component of the Sec protein translocase complex. Heterotrimer consisting of SecY, SecE and SecG subunits. The heterotrimers can form oligomers, although 1 heterotrimer is thought to be able to translocate proteins. Interacts with the ribosome. Interacts with SecDF, and other proteins may be involved. Interacts with SecA.

The protein resides in the cell inner membrane. Its function is as follows. The central subunit of the protein translocation channel SecYEG. Consists of two halves formed by TMs 1-5 and 6-10. These two domains form a lateral gate at the front which open onto the bilayer between TMs 2 and 7, and are clamped together by SecE at the back. The channel is closed by both a pore ring composed of hydrophobic SecY resides and a short helix (helix 2A) on the extracellular side of the membrane which forms a plug. The plug probably moves laterally to allow the channel to open. The ring and the pore may move independently. This chain is Protein translocase subunit SecY, found in Chlamydia muridarum (strain MoPn / Nigg).